The sequence spans 487 residues: METVQLRNPPRRQLKKLDEDSLTKQPEEVFDVLEKLGEGSYGSVYKAIHKETGQIVAIKQVPVESDLQEIIKEISIMQQCDSPHVVKYYGSYFKNTDLWIVMEYCGAGSVSDIIRLRNKTLTEDEIATILQSTLKGLEYLHFMRKIHRDIKAGNILLNTEGHAKLADFGVAGQLTDTMAKRNTVIGTPFWMAPEVIQEIGYNCVADIWSLGITAIEMAEGKPPYADIHPMRAIFMIPTNPPPTFRKPELWSDNFTDFVKQCLVKSPEQRATATQLLQHPFVKSAKGVSILRDLINEAMDVKLKRQESQQREVDQDDEENSEEDEMDSGTMVRAVGDEMGTVRVASTMTDGASTMIEHDDTLPSQLGTMVINTEDEEEEGTMKRRDETMQPAKPSFLEYFEQKEKENQINSFGKSVPGPLKNSSDWKIPQDGDYEFLKSWTVEDLQKRLLALDPMMEQEIEEIRQKYQSKRQPILDAIEAKKRRQQNF.

N-acetylmethionine is present on M1. At T3 the chain carries Phosphothreonine. The Protein kinase domain occupies 30-281 (FDVLEKLGEG…ATQLLQHPFV (252 aa)). ATP contacts are provided by residues 36–44 (LGEGSYGSV) and K59. D149 serves as the catalytic Proton acceptor. A Phosphothreonine; by autocatalysis modification is found at T183. S265 carries the post-translational modification Phosphoserine. Positions 290-310 (LRDLINEAMDVKLKRQESQQR) form a coiled coil. Positions 303 to 312 (KRQESQQREV) are enriched in basic and acidic residues. The tract at residues 303–332 (KRQESQQREVDQDDEENSEEDEMDSGTMVR) is disordered. Over residues 313–326 (DQDDEENSEEDEMD) the composition is skewed to acidic residues. Phosphoserine is present on S320. Phosphothreonine is present on residues T340 and T367. Position 387 is a phosphothreonine; by PKB/AKT1 (T387). S410 and S414 each carry phosphoserine. A Phosphotyrosine modification is found at Y433. The 48-residue stretch at 433-480 (YEFLKSWTVEDLQKRLLALDPMMEQEIEEIRQKYQSKRQPILDAIEAK) folds into the SARAH domain.

The protein belongs to the protein kinase superfamily. STE Ser/Thr protein kinase family. STE20 subfamily. Homodimer; mediated via the coiled-coil region. Interacts with NORE1, which inhibits autoactivation. Interacts with and stabilizes SAV1. Interacts with RASSF1. Interacts with FOXO3. Interacts with RASSF2 (via SARAH domain). Interacts with AR, PKB/AKT1, TNNI3 and SIRT1. Interacts with DLG5 (via PDZ domain 3). Interacts with MARK3 and SCRIB in the presence of DLG5. The cofactor is Mg(2+). In terms of processing, autophosphorylated on serine and threonine residues. Phosphorylation at Thr-387 by PKB/AKT1, leads to inhibition of its: kinase activity, nuclear translocation and autophosphorylation at Thr-183. It also diminishes its cleavage by caspases and its ability to phosphorylate FOXO3. Proteolytically cleaved by caspase-3 during apoptosis at Asp-326 and Asp-349 resulting in a 37 kDa or a 39 kDa subunit respectively. The 39 kDa subunit is further cleaved into the 37 kDa form. Proteolytic cleavage results in kinase activation and nuclear translocation of the truncated form (MST1/N). It is less likely that cleavage at Asp-349 is a prerequisite for activation as this site is not conserved in the murine ortholog.

The protein localises to the cytoplasm. The protein resides in the nucleus. The enzyme catalyses L-seryl-[protein] + ATP = O-phospho-L-seryl-[protein] + ADP + H(+). It carries out the reaction L-threonyl-[protein] + ATP = O-phospho-L-threonyl-[protein] + ADP + H(+). With respect to regulation, inhibited by the C-terminal non-catalytic region. Activated by caspase-cleavage. Full activation also requires homodimerization and autophosphorylation of Thr-183. Activated by RASSF1 which acts by preventing its dephosphorylation. Stress-activated, pro-apoptotic kinase which, following caspase-cleavage, enters the nucleus and induces chromatin condensation followed by internucleosomal DNA fragmentation. Key component of the Hippo signaling pathway which plays a pivotal role in organ size control and tumor suppression by restricting proliferation and promoting apoptosis. The core of this pathway is composed of a kinase cascade wherein STK3/MST2 and STK4/MST1, in complex with its regulatory protein SAV1, phosphorylates and activates LATS1/2 in complex with its regulatory protein MOB1, which in turn phosphorylates and inactivates YAP1 oncoprotein and WWTR1/TAZ. Phosphorylation of YAP1 by LATS2 inhibits its translocation into the nucleus to regulate cellular genes important for cell proliferation, cell death, and cell migration. STK3/MST2 and STK4/MST1 are required to repress proliferation of mature hepatocytes, to prevent activation of facultative adult liver stem cells (oval cells), and to inhibit tumor formation. Phosphorylates 'Ser-14' of histone H2B (H2BS14ph) during apoptosis. Phosphorylates FOXO3 upon oxidative stress, which results in its nuclear translocation and cell death initiation. Phosphorylates MOBKL1A, MOBKL1B and RASSF2. Phosphorylates TNNI3 (cardiac Tn-I) and alters its binding affinity to TNNC1 (cardiac Tn-C) and TNNT2 (cardiac Tn-T). Phosphorylates FOXO1 on 'Ser-212' and regulates its activation and stimulates transcription of PMAIP1 in a FOXO1-dependent manner. Phosphorylates SIRT1 and inhibits SIRT1-mediated p53/TP53 deacetylation, thereby promoting p53/TP53 dependent transcription and apoptosis upon DNA damage. Acts as an inhibitor of PKB/AKT1. Phosphorylates AR on 'Ser-650' and suppresses its activity by intersecting with PKB/AKT1 signaling and antagonizing formation of AR-chromatin complexes. This Macaca mulatta (Rhesus macaque) protein is Serine/threonine-protein kinase 4 (STK4).